The chain runs to 92 residues: Small ribosomal subunit protein uS19 (92 aa).

This sequence belongs to the universal ribosomal protein uS19 family.

Functionally, protein S19 forms a complex with S13 that binds strongly to the 16S ribosomal RNA. This Baumannia cicadellinicola subsp. Homalodisca coagulata protein is Small ribosomal subunit protein uS19.